The chain runs to 122 residues: Small ribosomal subunit protein uS13 (122 aa).

Residues 95 to 122 are disordered; sequence GLPVHGQRTKTNARTRKGPARTVAGKKK.

This sequence belongs to the universal ribosomal protein uS13 family. Part of the 30S ribosomal subunit. Forms a loose heterodimer with protein S19. Forms two bridges to the 50S subunit in the 70S ribosome.

Functionally, located at the top of the head of the 30S subunit, it contacts several helices of the 16S rRNA. In the 70S ribosome it contacts the 23S rRNA (bridge B1a) and protein L5 of the 50S subunit (bridge B1b), connecting the 2 subunits; these bridges are implicated in subunit movement. Contacts the tRNAs in the A and P-sites. This chain is Small ribosomal subunit protein uS13, found in Geotalea uraniireducens (strain Rf4) (Geobacter uraniireducens).